We begin with the raw amino-acid sequence, 1417 residues long: DNA-directed RNA polymerase subunit beta' (1417 aa).

Zn(2+) contacts are provided by C68, C70, C83, and C86. D458, D460, and D462 together coordinate Mg(2+). Residues C811, C884, C891, and C894 each coordinate Zn(2+).

Belongs to the RNA polymerase beta' chain family. As to quaternary structure, the RNAP catalytic core consists of 2 alpha, 1 beta, 1 beta' and 1 omega subunit. When a sigma factor is associated with the core the holoenzyme is formed, which can initiate transcription. Mg(2+) is required as a cofactor. It depends on Zn(2+) as a cofactor.

It catalyses the reaction RNA(n) + a ribonucleoside 5'-triphosphate = RNA(n+1) + diphosphate. Functionally, DNA-dependent RNA polymerase catalyzes the transcription of DNA into RNA using the four ribonucleoside triphosphates as substrates. The protein is DNA-directed RNA polymerase subunit beta' of Francisella tularensis subsp. tularensis (strain FSC 198).